Reading from the N-terminus, the 87-residue chain is CRISPR-associated endoribonuclease Cas2 (87 aa).

A Mg(2+)-binding site is contributed by Asp8.

It belongs to the CRISPR-associated endoribonuclease Cas2 protein family. Homodimer, forms a heterotetramer with a Cas1 homodimer. Mg(2+) is required as a cofactor.

Functionally, CRISPR (clustered regularly interspaced short palindromic repeat), is an adaptive immune system that provides protection against mobile genetic elements (viruses, transposable elements and conjugative plasmids). CRISPR clusters contain sequences complementary to antecedent mobile elements and target invading nucleic acids. CRISPR clusters are transcribed and processed into CRISPR RNA (crRNA). Functions as a ssRNA-specific endoribonuclease. Involved in the integration of spacer DNA into the CRISPR cassette. The protein is CRISPR-associated endoribonuclease Cas2 of Methanosarcina acetivorans (strain ATCC 35395 / DSM 2834 / JCM 12185 / C2A).